The primary structure comprises 258 residues: UPF0246 protein YaaA (258 aa).

This sequence belongs to the UPF0246 family.

The chain is UPF0246 protein YaaA from Escherichia coli (strain K12 / MC4100 / BW2952).